The chain runs to 427 residues: Hydroxylamine reductase (427 aa).

Cysteine 3, cysteine 6, cysteine 15, and cysteine 21 together coordinate [4Fe-4S] cluster. Hybrid [4Fe-2O-2S] cluster-binding residues include histidine 129, glutamate 153, cysteine 197, cysteine 283, cysteine 311, cysteine 336, glutamate 370, and lysine 372. Cysteine 283 bears the Cysteine persulfide mark.

It belongs to the HCP family. Requires [4Fe-4S] cluster as cofactor. The cofactor is hybrid [4Fe-2O-2S] cluster.

It is found in the cytoplasm. It carries out the reaction A + NH4(+) + H2O = hydroxylamine + AH2 + H(+). In terms of biological role, catalyzes the reduction of hydroxylamine to form NH(3) and H(2)O. This chain is Hydroxylamine reductase, found in Moorella thermoacetica (strain ATCC 39073 / JCM 9320).